A 533-amino-acid polypeptide reads, in one-letter code: Light-independent protochlorophyllide reductase subunit B (533 aa).

D36 is a binding site for [4Fe-4S] cluster. Catalysis depends on D292, which acts as the Proton donor. Position 428-429 (428-429 (GL)) interacts with substrate.

It belongs to the ChlB/BchB/BchZ family. As to quaternary structure, protochlorophyllide reductase is composed of three subunits; BchL, BchN and BchB. Forms a heterotetramer of two BchB and two BchN subunits. Requires [4Fe-4S] cluster as cofactor.

The catalysed reaction is chlorophyllide a + oxidized 2[4Fe-4S]-[ferredoxin] + 2 ADP + 2 phosphate = protochlorophyllide a + reduced 2[4Fe-4S]-[ferredoxin] + 2 ATP + 2 H2O. The protein operates within porphyrin-containing compound metabolism; bacteriochlorophyll biosynthesis (light-independent). In terms of biological role, component of the dark-operative protochlorophyllide reductase (DPOR) that uses Mg-ATP and reduced ferredoxin to reduce ring D of protochlorophyllide (Pchlide) to form chlorophyllide a (Chlide). This reaction is light-independent. The NB-protein (BchN-BchB) is the catalytic component of the complex. The chain is Light-independent protochlorophyllide reductase subunit B from Prosthecochloris aestuarii (strain DSM 271 / SK 413).